Here is a 428-residue protein sequence, read N- to C-terminus: Pyruvate dehydrogenase E1 component subunit alpha-3, chloroplastic (428 aa).

Residues 1 to 61 (MATAFAPTKL…NATRRSPVVS (61 aa)) constitute a chloroplast transit peptide. Residues His-115, Tyr-141, Arg-142, Ala-190, Ile-192, Asp-227, Gly-228, and Asn-256 each coordinate pyruvate. Residues Tyr-141, Arg-142, Ala-190, Ile-192, Asp-227, Gly-228, Asn-256, and His-325 each coordinate thiamine diphosphate. Residue Asp-227 coordinates Mg(2+). Residue Asn-256 participates in Mg(2+) binding.

Tetramer of 2 alpha and 2 beta subunits. The cofactor is thiamine diphosphate. Requires Mg(2+) as cofactor.

Its subcellular location is the plastid. The protein resides in the chloroplast. The enzyme catalyses N(6)-[(R)-lipoyl]-L-lysyl-[protein] + pyruvate + H(+) = N(6)-[(R)-S(8)-acetyldihydrolipoyl]-L-lysyl-[protein] + CO2. In terms of biological role, the pyruvate dehydrogenase complex catalyzes the overall conversion of pyruvate to acetyl-CoA and CO(2). It contains multiple copies of three enzymatic components: pyruvate dehydrogenase (E1), dihydrolipoamide acetyltransferase (E2) and lipoamide dehydrogenase (E3). The protein is Pyruvate dehydrogenase E1 component subunit alpha-3, chloroplastic (PDH-E1 ALPHA) of Arabidopsis thaliana (Mouse-ear cress).